We begin with the raw amino-acid sequence, 192 residues long: MVVGLFGGSFNPPHQGHALVAEIAIKRLGLDQLWWMVTPGNPLKSRNQLAPLAERIAESERVAADPRVKVTAFEQSLGVSYTANTLAWVKARNPHVHFIWIMGADGLQTFHKWQKWQEIVRTFPIAVIDRPGATLSYLSSKMTRTFDFARVDEDDARILWKKPAPAWTFIHGPRSGLSSTAIRNGSVPDDSE.

The protein belongs to the NadD family.

The enzyme catalyses nicotinate beta-D-ribonucleotide + ATP + H(+) = deamido-NAD(+) + diphosphate. It participates in cofactor biosynthesis; NAD(+) biosynthesis; deamido-NAD(+) from nicotinate D-ribonucleotide: step 1/1. In terms of biological role, catalyzes the reversible adenylation of nicotinate mononucleotide (NaMN) to nicotinic acid adenine dinucleotide (NaAD). In Rhizobium leguminosarum bv. trifolii (strain WSM2304), this protein is Probable nicotinate-nucleotide adenylyltransferase.